The primary structure comprises 94 residues: MRKYEIMYIINPTVLEEGREELVNQVNALLTSNGATIAKTEKWGERKLAYPIDKKKSGFYVLTTFEIDGTKLAEVESKLNIMESVMRYIVVKQD.

Belongs to the bacterial ribosomal protein bS6 family.

Binds together with bS18 to 16S ribosomal RNA. This chain is Small ribosomal subunit protein bS6, found in Fusobacterium nucleatum subsp. nucleatum (strain ATCC 25586 / DSM 15643 / BCRC 10681 / CIP 101130 / JCM 8532 / KCTC 2640 / LMG 13131 / VPI 4355).